A 137-amino-acid polypeptide reads, in one-letter code: Small ribosomal subunit protein uS8 (137 aa).

It belongs to the universal ribosomal protein uS8 family. As to quaternary structure, part of the 30S ribosomal subunit. Contacts proteins S5 and S12.

In terms of biological role, one of the primary rRNA binding proteins, it binds directly to 16S rRNA central domain where it helps coordinate assembly of the platform of the 30S subunit. This Metamycoplasma arthritidis (strain 158L3-1) (Mycoplasma arthritidis) protein is Small ribosomal subunit protein uS8.